A 448-amino-acid polypeptide reads, in one-letter code: Tubulin beta chain (448 aa).

Gln11, Glu69, Ser138, Gly142, Thr143, Gly144, Asn204, and Asn226 together coordinate GTP. A Mg(2+)-binding site is contributed by Glu69. The interval 425–448 (YQDASISEGEEEYLEEEEPLEHEE) is disordered. The segment covering 432–448 (EGEEEYLEEEEPLEHEE) has biased composition (acidic residues).

Belongs to the tubulin family. As to quaternary structure, dimer of alpha and beta chains. A typical microtubule is a hollow water-filled tube with an outer diameter of 25 nm and an inner diameter of 15 nM. Alpha-beta heterodimers associate head-to-tail to form protofilaments running lengthwise along the microtubule wall with the beta-tubulin subunit facing the microtubule plus end conferring a structural polarity. Microtubules usually have 13 protofilaments but different protofilament numbers can be found in some organisms and specialized cells. The cofactor is Mg(2+).

Its subcellular location is the cytoplasm. The protein resides in the cytoskeleton. Tubulin is the major constituent of microtubules, a cylinder consisting of laterally associated linear protofilaments composed of alpha- and beta-tubulin heterodimers. Microtubules grow by the addition of GTP-tubulin dimers to the microtubule end, where a stabilizing cap forms. Below the cap, tubulin dimers are in GDP-bound state, owing to GTPase activity of alpha-tubulin. The sequence is that of Tubulin beta chain (benA56) from Aspergillus oryzae (strain ATCC 42149 / RIB 40) (Yellow koji mold).